The chain runs to 424 residues: Endoglucanase 1 (424 aa).

The first 18 residues, 1-18, serve as a signal peptide directing secretion; the sequence is MAKFSALCSLALLGLATA. 9 disulfide bridges follow: Cys35–Cys41, Cys68–Cys90, Cys80–Cys86, Cys156–Cys384, Cys188–Cys211, Cys192–Cys210, Cys231–Cys250, Cys239–Cys244, and Cys255–Cys331. N-linked (GlcNAc...) asparagine glycosylation occurs at Asn76. Catalysis depends on Glu213, which acts as the Nucleophile. Catalysis depends on Glu218, which acts as the Proton donor. N-linked (GlcNAc...) asparagine glycans are attached at residues Asn271 and Asn385.

The protein belongs to the glycosyl hydrolase 7 (cellulase C) family. Monomer.

Its subcellular location is the secreted. The enzyme catalyses Endohydrolysis of (1-&gt;4)-beta-D-glucosidic linkages in cellulose, lichenin and cereal beta-D-glucans.. In terms of biological role, endoglucanase that is involved in the biological conversion of cellulose to glucose. Hydrolyzes internal beta-1,4-glucosidic bonds. This chain is Endoglucanase 1, found in Pyricularia oryzae (strain 70-15 / ATCC MYA-4617 / FGSC 8958) (Rice blast fungus).